Consider the following 475-residue polypeptide: 3-isopropylmalate dehydratase large subunit (475 aa).

The [4Fe-4S] cluster site is built by C348, C408, and C411.

This sequence belongs to the aconitase/IPM isomerase family. LeuC type 1 subfamily. In terms of assembly, heterodimer of LeuC and LeuD. [4Fe-4S] cluster is required as a cofactor.

It catalyses the reaction (2R,3S)-3-isopropylmalate = (2S)-2-isopropylmalate. The protein operates within amino-acid biosynthesis; L-leucine biosynthesis; L-leucine from 3-methyl-2-oxobutanoate: step 2/4. Its function is as follows. Catalyzes the isomerization between 2-isopropylmalate and 3-isopropylmalate, via the formation of 2-isopropylmaleate. In Acidobacterium capsulatum (strain ATCC 51196 / DSM 11244 / BCRC 80197 / JCM 7670 / NBRC 15755 / NCIMB 13165 / 161), this protein is 3-isopropylmalate dehydratase large subunit.